The sequence spans 386 residues: DNA-directed RNA polymerase subunit Rpo1C (386 aa).

Belongs to the RNA polymerase beta' chain family. As to quaternary structure, part of the RNA polymerase complex.

Its subcellular location is the cytoplasm. The enzyme catalyses RNA(n) + a ribonucleoside 5'-triphosphate = RNA(n+1) + diphosphate. Its function is as follows. DNA-dependent RNA polymerase (RNAP) catalyzes the transcription of DNA into RNA using the four ribonucleoside triphosphates as substrates. Forms part of the jaw domain. In Methanococcus maripaludis (strain C5 / ATCC BAA-1333), this protein is DNA-directed RNA polymerase subunit Rpo1C.